A 302-amino-acid polypeptide reads, in one-letter code: DDRGK domain-containing protein 1 (302 aa).

The helical transmembrane segment at 1–21 (MDPLLLGSVGVLVLAVTLIIW) threads the bilayer. Residues 22 to 302 (RLLKLQWDEK…IRLETPSAAE (281 aa)) are Cytoplasmic-facing. Residues 101 to 178 (EYDEDGKKIG…EREEKERKEH (78 aa)) form a disordered region. Residues 118 to 178 (QAKEEKRQMR…EREEKERKEH (61 aa)) are compositionally biased toward basic and acidic residues.

It belongs to the DDRGK1 family.

It is found in the endoplasmic reticulum membrane. Its function is as follows. Substrate adapter for ufmylation, the covalent attachment of the ubiquitin-like modifier ufm-1 to substrate proteins. This is DDRGK domain-containing protein 1 from Caenorhabditis elegans.